A 254-amino-acid chain; its full sequence is DNA repair protein RecO (254 aa).

Belongs to the RecO family.

Its function is as follows. Involved in DNA repair and RecF pathway recombination. In Anaeromyxobacter dehalogenans (strain 2CP-1 / ATCC BAA-258), this protein is DNA repair protein RecO.